Here is a 353-residue protein sequence, read N- to C-terminus: Protein pelota homolog (353 aa).

Belongs to the eukaryotic release factor 1 family. Pelota subfamily. In terms of assembly, monomer. A divalent metal cation serves as cofactor.

It is found in the cytoplasm. May function in recognizing stalled ribosomes, interact with stem-loop structures in stalled mRNA molecules, and effect endonucleolytic cleavage of the mRNA. May play a role in the release non-functional ribosomes and degradation of damaged mRNAs. Has endoribonuclease activity. In Methanobrevibacter smithii (strain ATCC 35061 / DSM 861 / OCM 144 / PS), this protein is Protein pelota homolog.